Consider the following 434-residue polypeptide: Probable proline transporter 2 (434 aa).

A run of 11 helical transmembrane segments spans residues 26-46 (PWYQ…VLGY), 49-69 (SVMV…AAAI), 106-126 (LTWA…IILA), 149-169 (IALS…LSAL), 171-191 (IWLG…FVLS), 213-233 (IFTT…GMLP), 251-271 (LWFQ…MGYW), 297-317 (LSAF…MYEF), 339-359 (VGVR…LPFL), 362-382 (FMSL…ANHM), and 403-423 (VAGF…LIMV).

It belongs to the amino acid/polyamine transporter 2 family. Amino acid/auxin permease (AAAP) (TC 2.A.18.3) subfamily.

It localises to the cell membrane. Proline transporter that mediates proline transport across the plasma membrane. The chain is Probable proline transporter 2 from Oryza sativa subsp. japonica (Rice).